The primary structure comprises 305 residues: MKYLEIAVEVESCFTETVADIFWEFNTGGVSIEDPLLLWQYINAQIWDAYEFPDSVLKAERATVRAYFPLTENINTLLSQINERLKSLGIPFNLYFQEVDEESWANSWKKYFKPVEVGEFLIKPTWEKLPSGKEDKKIIEIDPGMAFGTGTHVTTALVLEALPKYVSPGKVVVDVGTGSGILAIASALLGAEKIYALDIDPVAVKVARENISINRLEDKITVIENDLLHGFNQTVDVIIANIIAAVIKELALDAYEKLATGGIFIGSGIIVEREKEVMDKLLEVGFKIIERKNSGGWCLLVARKE.

S-adenosyl-L-methionine contacts are provided by Thr-155, Gly-176, Asp-198, and Asn-241.

The protein belongs to the methyltransferase superfamily. PrmA family.

It localises to the cytoplasm. The enzyme catalyses L-lysyl-[protein] + 3 S-adenosyl-L-methionine = N(6),N(6),N(6)-trimethyl-L-lysyl-[protein] + 3 S-adenosyl-L-homocysteine + 3 H(+). Its function is as follows. Methylates ribosomal protein L11. This chain is Ribosomal protein L11 methyltransferase, found in Carboxydothermus hydrogenoformans (strain ATCC BAA-161 / DSM 6008 / Z-2901).